A 4334-amino-acid chain; its full sequence is Cytoplasmic dynein 2 heavy chain 1 (4334 aa).

The tract at residues 1–1704 (MSSDSRKTFV…KVAMAEATFD (1704 aa)) is stem. 150–157 (LGTAVRKG) serves as a coordination point for ATP. The stretch at 1026-1097 (QEAKGLTAKL…AHLEEQKGNL (72 aa)) forms a coiled coil. 4 AAA regions span residues 1705-1929 (YTWE…VLGI), 1996-2211 (KALA…KAFQ), 2299-2544 (GMDE…WING), and 2641-2882 (GYER…SSGS). ATP-binding positions include 1743-1750 (GPAGTGKT), 2034-2041 (GPSGSGKS), 2334-2341 (GPEGCGKG), and 2679-2686 (GNSGVGRR). Residues 2897 to 3185 (QIYNRKRTQV…ISVDKAESVL (289 aa)) are stalk. 2 coiled-coil regions span residues 2930 to 2998 (LSAE…SEVQ) and 3120 to 3199 (ERVS…RGEK). 2 AAA regions span residues 3260–3492 (LSSE…TVEK) and 3701–3917 (MSSF…VITL).

The protein belongs to the dynein heavy chain family. In terms of assembly, the cytoplasmic dynein complex 2 is probably composed by a DHC1B homodimer and a number of D1BLIC light intermediate chains. Interacts with FAP133, FLA10 and LC8.

The protein localises to the cytoplasm. It is found in the cytoskeleton. It localises to the flagellum basal body. Its subcellular location is the cell projection. The protein resides in the cilium. The protein localises to the flagellum membrane. May function as a motor for intraflagellar retrograde transport. Functions in flagellar biogenesis. The polypeptide is Cytoplasmic dynein 2 heavy chain 1 (DHC1B) (Chlamydomonas reinhardtii (Chlamydomonas smithii)).